Reading from the N-terminus, the 374-residue chain is DNA replication and repair protein RecF (374 aa).

Glycine 30 to serine 37 is an ATP binding site.

This sequence belongs to the RecF family.

The protein resides in the cytoplasm. Functionally, the RecF protein is involved in DNA metabolism; it is required for DNA replication and normal SOS inducibility. RecF binds preferentially to single-stranded, linear DNA. It also seems to bind ATP. In Acaryochloris marina (strain MBIC 11017), this protein is DNA replication and repair protein RecF.